The following is a 241-amino-acid chain: MSGHNKWSKIKNKKGSEDARRGKIFTKMARAITVAVREGGADPEYNPSLKSVIEKARAENMPNDNIDRAIKKASGDGDSANYENIVYEGYGPEGVAVIVECLTDNRNRTASDVRHYFDKFGGNLGQNGSVSFMFQRKGLLLIDADSLDEEEVMMDSLDAGAEDFEADDGIFVINTAMEDFAQVRDTLLDKGYKFVKSDLVYEPSNYVKINDESNVDKMEKLIDNLEDSDDVQQVSHNWDNE.

Belongs to the TACO1 family.

The protein localises to the cytoplasm. In Finegoldia magna (strain ATCC 29328 / DSM 20472 / WAL 2508) (Peptostreptococcus magnus), this protein is Probable transcriptional regulatory protein FMG_0893.